The following is a 320-amino-acid chain: MRQTKTGILLANLGTPDAPTPEAVKRYLKQFLSDRRVVDTSRLLWWPLLRGVILPLRSPRVAKLYASVWMEGGSPLMVYSRQQQQALAQRLPETPVALGMSYGSPSLESAVDELLAEHVDHIVVLPLYPQYSCSTVGAVWDELARILARKRSIPGISFIRDYADNHDYINALANSVRASFAKHGEPDLLLLSYHGIPQRYADEGDDYPQRCRTTTRELASALEMAPEKVMMTFQSRFGREPWLMPYTDETLKMLGEKGVGHIQVMCPGFAADCLETLEEIAEQNREVFLGAGGKKYEYIPALNATPEHIEMMANLVAAYR.

His194 and Glu275 together coordinate Fe cation.

This sequence belongs to the ferrochelatase family. In terms of assembly, monomer.

The protein resides in the cytoplasm. It carries out the reaction heme b + 2 H(+) = protoporphyrin IX + Fe(2+). The protein operates within porphyrin-containing compound metabolism; protoheme biosynthesis; protoheme from protoporphyrin-IX: step 1/1. Catalyzes the ferrous insertion into protoporphyrin IX. The sequence is that of Ferrochelatase from Escherichia coli O81 (strain ED1a).